Consider the following 100-residue polypeptide: Aspartyl/glutamyl-tRNA(Asn/Gln) amidotransferase subunit C (100 aa).

Belongs to the GatC family. In terms of assembly, heterotrimer of A, B and C subunits.

It carries out the reaction L-glutamyl-tRNA(Gln) + L-glutamine + ATP + H2O = L-glutaminyl-tRNA(Gln) + L-glutamate + ADP + phosphate + H(+). The catalysed reaction is L-aspartyl-tRNA(Asn) + L-glutamine + ATP + H2O = L-asparaginyl-tRNA(Asn) + L-glutamate + ADP + phosphate + 2 H(+). In terms of biological role, allows the formation of correctly charged Asn-tRNA(Asn) or Gln-tRNA(Gln) through the transamidation of misacylated Asp-tRNA(Asn) or Glu-tRNA(Gln) in organisms which lack either or both of asparaginyl-tRNA or glutaminyl-tRNA synthetases. The reaction takes place in the presence of glutamine and ATP through an activated phospho-Asp-tRNA(Asn) or phospho-Glu-tRNA(Gln). The protein is Aspartyl/glutamyl-tRNA(Asn/Gln) amidotransferase subunit C of Staphylococcus epidermidis (strain ATCC 35984 / DSM 28319 / BCRC 17069 / CCUG 31568 / BM 3577 / RP62A).